Consider the following 581-residue polypeptide: Ezrin (581 aa).

Residues 2–295 (PKPINVRVTT…GNHELYMRRR (294 aa)) enclose the FERM domain. K60 is modified (N6-acetyllysine). The short motif at 115-120 (IYCPPE) is the [IL]-x-C-x-x-[DE] motif element. Phosphotyrosine; by PDGFR is present on Y146. The tract at residues 244–581 (EIRNISFNDK…KQRIDEFEAM (338 aa)) is interaction with SCYL3. Positions 302–462 (VQQMKAQARE…QDDLVKTREE (161 aa)) form a coiled coil. The interval 306 to 341 (KAQAREEKHQKQLERQQLETEKKRRETVEREKEQMM) is disordered. The span at 308-341 (QAREEKHQKQLERQQLETEKKRRETVEREKEQMM) shows a compositional bias: basic and acidic residues. Y354 carries the phosphotyrosine; by PDGFR modification. S366 is modified (phosphoserine). A Phosphotyrosine modification is found at Y476. Positions 534 to 560 (SQARDENKRTHNDIIHNENMRQGRDKY) are disordered. The span at 535–560 (QARDENKRTHNDIIHNENMRQGRDKY) shows a compositional bias: basic and acidic residues. At T562 the chain carries Phosphothreonine; by ROCK2 and PKC/PRKCI.

In terms of assembly, interacts with PALS1 and NHERF2. Found in a complex with EZR, PODXL and NHERF2. Interacts with MCC, PLEKHG6, PODXL, SCYL3/PACE1, NHERF1 and TMEM8B. Interacts (when phosphorylated) with FES/FPS. Interacts with dimeric S100P, the interaction may be activating through unmasking of F-actin binding sites. Identified in complexes that contain VIM, EZR, AHNAK, BFSP1, BFSP2, ANK2, PLEC, PRX and spectrin. Detected in a complex composed of at least EZR, AHNAK, PPL and PRX. Interacts with PDPN (via cytoplasmic domain); activates RHOA and promotes epithelial-mesenchymal transition. Interacts with SPN/CD43 cytoplasmic tail, CD44 and ICAM2. Interacts with SLC9A3; interaction targets SLC9A3 to the apical membrane. Interacts with SLC9A1; regulates interactions of SLC9A1 with cytoskeletal and promotes stress fiber formation. Interacts with CLIC5; may work together in a complex which also includes RDX and MYO6 to stabilize linkages between the plasma membrane and subjacent actin cytoskeleton at the base of stereocilia. In terms of processing, phosphorylated by tyrosine-protein kinases. Phosphorylation by ROCK2 suppresses the head-to-tail association of the N-terminal and C-terminal halves resulting in an opened conformation which is capable of actin and membrane-binding. Post-translationally, S-nitrosylation is induced by interferon-gamma and oxidatively-modified low-densitity lipoprotein (LDL(ox)) possibly implicating the iNOS-S100A8/9 transnitrosylase complex. Detected in eye lens fiber cells (at protein level).

It localises to the apical cell membrane. It is found in the cell projection. Its subcellular location is the microvillus membrane. The protein localises to the ruffle membrane. The protein resides in the cytoplasm. It localises to the cell cortex. It is found in the cytoskeleton. Its subcellular location is the microvillus. Its activity is regulated as follows. A head-to-tail association, of the N-terminal and C-terminal halves results in a closed conformation (inactive form) which is incapable of actin or membrane-binding. In terms of biological role, probably involved in connections of major cytoskeletal structures to the plasma membrane. In epithelial cells, required for the formation of microvilli and membrane ruffles on the apical pole. Along with PLEKHG6, required for normal macropinocytosis. The sequence is that of Ezrin (EZR) from Bos taurus (Bovine).